The sequence spans 622 residues: Pyranose 2-oxidase (622 aa).

A signal peptide spans 1–28 (MSASSSDPFHSFAKTSFTSKAAKRATAH). The propeptide occupies 29 to 37 (SLPPLPGPG). Tele-8alpha-FAD histidine is present on histidine 167. Substrate contacts are provided by glutamine 449 and histidine 451. Residue histidine 546 is the Proton acceptor of the active site. Asparagine 591 is a catalytic residue.

It belongs to the GMC oxidoreductase family. As to quaternary structure, homotetramer. FAD is required as a cofactor. In terms of processing, not glycosylated.

Its subcellular location is the periplasm. It carries out the reaction D-glucose + O2 = 2-dehydro-D-glucose + H2O2. Its function is as follows. Catalyzes the oxidation of various aldopyranoses and disaccharides on carbon-2 to the corresponding 2-keto sugars concomitant with the reduction of O(2) to H(2)O(2). Plays an important role in lignin degradation of wood rot fungi by supplying the essential cosubstrate H(2)O(2) for the ligninolytic peroxidases, lignin peroxidase and manganese-dependent peroxidase. The preferred substrate is D-glucose which is converted to 2-dehydro-D-glucose, an intermediate of a secondary metabolic pathway leading to the antibiotic cortalcerone. Also acts on D-xylose, together with D-glucose the major sugars derived from wood, on L-sorbose, D-galactose and 1,5-anhydroglucitol, a diagnostic marker of diabetes mellitus. The polypeptide is Pyranose 2-oxidase (p2ox) (Phlebiopsis gigantea (White-rot fungus)).